Reading from the N-terminus, the 389-residue chain is Chalcone synthase 3 (389 aa).

Residue C164 is part of the active site.

The protein belongs to the thiolase-like superfamily. Chalcone/stilbene synthases family.

It catalyses the reaction (E)-4-coumaroyl-CoA + 3 malonyl-CoA + 3 H(+) = 2',4,4',6'-tetrahydroxychalcone + 3 CO2 + 4 CoA. The protein operates within secondary metabolite biosynthesis; flavonoid biosynthesis. Its function is as follows. The primary product of this enzyme is 4,2',4',6'-tetrahydroxychalcone (also termed naringenin-chalcone or chalcone) which can under specific conditions spontaneously isomerize into naringenin. This Pisum sativum (Garden pea) protein is Chalcone synthase 3 (CHS3).